The primary structure comprises 122 residues: Large ribosomal subunit protein uL14 (122 aa).

The protein belongs to the universal ribosomal protein uL14 family. In terms of assembly, part of the 50S ribosomal subunit. Forms a cluster with proteins L3 and L19. In the 70S ribosome, L14 and L19 interact and together make contacts with the 16S rRNA in bridges B5 and B8.

Binds to 23S rRNA. Forms part of two intersubunit bridges in the 70S ribosome. This Leuconostoc citreum (strain KM20) protein is Large ribosomal subunit protein uL14.